Consider the following 232-residue polypeptide: UPF0177 protein in abiGi 5'region (232 aa).

6 helical membrane passes run 12–32 (YLSLFFLLFAIYWFPDVILAY), 47–67 (VVATWIFLGNMSISLFLGILI), 86–106 (LLFLLITTIILFVIYFFSYTY), 124–144 (SIQIVFPFVQFITIAICAPIF), 165–185 (IVSCVGFAWMHTGPNPILIVY), and 206–226 (ILVHGVFNALLPIVIPLLQVI).

This sequence belongs to the UPF0177 family.

It localises to the cell membrane. Functionally, the function of this protein is currently unknown, but it has been shown that it is not necessary for phage resistance. The chain is UPF0177 protein in abiGi 5'region from Lactococcus lactis subsp. cremoris (Streptococcus cremoris).